The sequence spans 109 residues: Thiosulfate sulfurtransferase GlpE (109 aa).

The region spanning 17–105 (HQQTAVLVDI…WHRHFPAEVA (89 aa)) is the Rhodanese domain. The active-site Cysteine persulfide intermediate is the cysteine 65.

Belongs to the GlpE family.

The protein resides in the cytoplasm. It carries out the reaction thiosulfate + hydrogen cyanide = thiocyanate + sulfite + 2 H(+). It catalyses the reaction thiosulfate + [thioredoxin]-dithiol = [thioredoxin]-disulfide + hydrogen sulfide + sulfite + 2 H(+). In terms of biological role, transferase that catalyzes the transfer of sulfur from thiosulfate to thiophilic acceptors such as cyanide or dithiols. May function in a CysM-independent thiosulfate assimilation pathway by catalyzing the conversion of thiosulfate to sulfite, which can then be used for L-cysteine biosynthesis. In Klebsiella pneumoniae subsp. pneumoniae (strain ATCC 700721 / MGH 78578), this protein is Thiosulfate sulfurtransferase GlpE.